Reading from the N-terminus, the 460-residue chain is MLKIYNTLTRQKEEFKPITAGKVGMYVCGVTIYDLCHIGHGRTFVSFDVVSRYLRYLGYDLTFVRNITDIDDKIIKRAAENGETCDSLTERLIGEMHADFDALNMKRPDVEPRATQYIQEIIELVERLIERGFAYVADNGDVMFEVNKFDEYGKLSKQDLDQLQAGARVDVETAKRCPLDFVLWKMSKPGEPTWESPWGPGRPGWHIECSAMNSSILGNHFDIHGGGSDLQFPHHENEIAQSCCAHDTQYVNTWMHSGMVMVDKEKMSKSLGNFFTIRDVLGHYDAETVRYFLMSGHYRSQLNYSEENLNQARASLERLYTSLRGLDFSAAPAGGEEYVSRFTAAMNDDFNTPEAYSVLFDMAREINRLKTEDLANASALGALMRELADVIGILHQDPDAFLKGDAGNDDEVAEIEALIKLRNDSRAAKDWANADMARDKLNEMGIVLEDGPEGTTWRRK.

Residue Cys28 participates in Zn(2+) binding. A 'HIGH' region motif is present at residues 30 to 40 (VTIYDLCHIGH). Positions 209, 234, and 238 each coordinate Zn(2+). Residues 266-270 (KMSKS) carry the 'KMSKS' region motif. Lys269 is a binding site for ATP.

Belongs to the class-I aminoacyl-tRNA synthetase family. In terms of assembly, monomer. Requires Zn(2+) as cofactor.

It is found in the cytoplasm. It catalyses the reaction tRNA(Cys) + L-cysteine + ATP = L-cysteinyl-tRNA(Cys) + AMP + diphosphate. The polypeptide is Cysteine--tRNA ligase (Vibrio vulnificus (strain CMCP6)).